The primary structure comprises 437 residues: UDP-N-acetylmuramate--L-alanine ligase (437 aa).

Residue 108-114 (GAHGKTS) coordinates ATP.

The protein belongs to the MurCDEF family.

The protein localises to the cytoplasm. It carries out the reaction UDP-N-acetyl-alpha-D-muramate + L-alanine + ATP = UDP-N-acetyl-alpha-D-muramoyl-L-alanine + ADP + phosphate + H(+). Its pathway is cell wall biogenesis; peptidoglycan biosynthesis. Functionally, cell wall formation. This Staphylococcus saprophyticus subsp. saprophyticus (strain ATCC 15305 / DSM 20229 / NCIMB 8711 / NCTC 7292 / S-41) protein is UDP-N-acetylmuramate--L-alanine ligase.